We begin with the raw amino-acid sequence, 214 residues long: Adenylate kinase (214 aa).

Position 10-15 (10-15 (GAGKGT)) interacts with ATP. Residues 30 to 59 (STGDMFRAALKNQTPLGLKAKEYMDKGELV) form an NMP region. AMP is bound by residues Thr31, Arg36, 57-59 (ELV), 85-88 (GFPR), and Gln92. The tract at residues 126 to 163 (GRRVCRQCGATYHVKFNPPKVEGVCDACGGELYQRSDD) is LID. ATP is bound at residue Arg127. Zn(2+)-binding residues include Cys130 and Cys133. 136–137 (TY) contributes to the ATP binding site. The Zn(2+) site is built by Cys150 and Cys153. 2 residues coordinate AMP: Arg160 and Arg171. Lys199 provides a ligand contact to ATP.

The protein belongs to the adenylate kinase family. As to quaternary structure, monomer.

The protein resides in the cytoplasm. The catalysed reaction is AMP + ATP = 2 ADP. The protein operates within purine metabolism; AMP biosynthesis via salvage pathway; AMP from ADP: step 1/1. Catalyzes the reversible transfer of the terminal phosphate group between ATP and AMP. Plays an important role in cellular energy homeostasis and in adenine nucleotide metabolism. This Carboxydothermus hydrogenoformans (strain ATCC BAA-161 / DSM 6008 / Z-2901) protein is Adenylate kinase.